The sequence spans 472 residues: 3-isopropylmalate dehydratase large subunit (472 aa).

Cys353, Cys414, and Cys417 together coordinate [4Fe-4S] cluster.

It belongs to the aconitase/IPM isomerase family. LeuC type 1 subfamily. In terms of assembly, heterodimer of LeuC and LeuD. [4Fe-4S] cluster serves as cofactor.

It carries out the reaction (2R,3S)-3-isopropylmalate = (2S)-2-isopropylmalate. Its pathway is amino-acid biosynthesis; L-leucine biosynthesis; L-leucine from 3-methyl-2-oxobutanoate: step 2/4. Its function is as follows. Catalyzes the isomerization between 2-isopropylmalate and 3-isopropylmalate, via the formation of 2-isopropylmaleate. In Acinetobacter baumannii (strain AB0057), this protein is 3-isopropylmalate dehydratase large subunit.